The chain runs to 192 residues: Ion-translocating oxidoreductase complex subunit A (192 aa).

6 helical membrane-spanning segments follow: residues 5-25, 39-59, 72-92, 102-122, 134-154, and 171-191; these read ILLL…FLGL, IGMG…AYLV, LRTM…EMVV, LLGI…VALL, IIYG…FASM, and SIAM…TGLV.

The protein belongs to the NqrDE/RnfAE family. The complex is composed of six subunits: RnfA, RnfB, RnfC, RnfD, RnfE and RnfG.

The protein localises to the cell inner membrane. Functionally, part of a membrane-bound complex that couples electron transfer with translocation of ions across the membrane. The sequence is that of Ion-translocating oxidoreductase complex subunit A from Vibrio vulnificus (strain CMCP6).